The primary structure comprises 61 residues: Bactridin-1 (61 aa).

Residues 1 to 61 (KDGYIIEHRG…KIFDSNNLKC (61 aa)) enclose the LCN-type CS-alpha/beta domain. Intrachain disulfides connect Cys11–Cys61, Cys15–Cys37, Cys23–Cys42, and Cys27–Cys44.

The protein belongs to the long (4 C-C) scorpion toxin superfamily. Sodium channel inhibitor family. Beta subfamily. Expressed by the venom gland.

It localises to the secreted. Its function is as follows. Shows antibacterial activity against both Gram-positive bacteria (B.subtilis, M.luteus, E.faecalis) and Gram-negative bacteria (P.aeruginosa, Y.enterocolitica, A.calcoaceticus). Modifies membrane sodium permeability on Y.enterocolitica. Is toxic to cockroaches and crabs, but is not toxic to mice. Does not induce haemolysis in human erythrocytes. Acts by inhibiting the sodium (Nav) currents. The polypeptide is Bactridin-1 (Tityus discrepans (Venezuelan scorpion)).